The sequence spans 209 residues: Large ribosomal subunit protein uL3 (209 aa).

Residues 133–152 (THGNSLSHRVPGSIGQNQTP) form a disordered region. Glutamine 150 bears the N5-methylglutamine mark.

This sequence belongs to the universal ribosomal protein uL3 family. As to quaternary structure, part of the 50S ribosomal subunit. Forms a cluster with proteins L14 and L19. Methylated by PrmB.

In terms of biological role, one of the primary rRNA binding proteins, it binds directly near the 3'-end of the 23S rRNA, where it nucleates assembly of the 50S subunit. The sequence is that of Large ribosomal subunit protein uL3 from Yersinia pseudotuberculosis serotype O:1b (strain IP 31758).